A 387-amino-acid polypeptide reads, in one-letter code: Phosphoglycerate kinase (387 aa).

Residues 21 to 23 (DLN), arginine 36, 60 to 63 (HLGR), arginine 114, and arginine 147 each bind substrate. ATP contacts are provided by residues lysine 198, glutamate 313, and 339-342 (GGDT).

This sequence belongs to the phosphoglycerate kinase family. In terms of assembly, monomer.

It is found in the cytoplasm. The catalysed reaction is (2R)-3-phosphoglycerate + ATP = (2R)-3-phospho-glyceroyl phosphate + ADP. It functions in the pathway carbohydrate degradation; glycolysis; pyruvate from D-glyceraldehyde 3-phosphate: step 2/5. This chain is Phosphoglycerate kinase, found in Baumannia cicadellinicola subsp. Homalodisca coagulata.